The following is a 352-amino-acid chain: Anthranilate phosphoribosyltransferase (352 aa).

5-phospho-alpha-D-ribose 1-diphosphate is bound by residues G94, 97 to 98 (GS), S102, 104 to 107 (NIST), 122 to 130 (KHGNRAVSS), and S134. An anthranilate-binding site is contributed by G94. S106 serves as a coordination point for Mg(2+). An anthranilate-binding site is contributed by N125. Residue R180 coordinates anthranilate. Mg(2+)-binding residues include D239 and E240.

The protein belongs to the anthranilate phosphoribosyltransferase family. As to quaternary structure, homodimer. Mg(2+) serves as cofactor.

The catalysed reaction is N-(5-phospho-beta-D-ribosyl)anthranilate + diphosphate = 5-phospho-alpha-D-ribose 1-diphosphate + anthranilate. It functions in the pathway amino-acid biosynthesis; L-tryptophan biosynthesis; L-tryptophan from chorismate: step 2/5. Catalyzes the transfer of the phosphoribosyl group of 5-phosphorylribose-1-pyrophosphate (PRPP) to anthranilate to yield N-(5'-phosphoribosyl)-anthranilate (PRA). In Geobacter sp. (strain M21), this protein is Anthranilate phosphoribosyltransferase.